Here is a 351-residue protein sequence, read N- to C-terminus: DNA polymerase IV (351 aa).

One can recognise a UmuC domain in the interval 4 to 185 (IIHVDMDCFF…LPLAKIPGVG (182 aa)). Asp-8 and Asp-103 together coordinate Mg(2+). Glu-104 is a catalytic residue.

It belongs to the DNA polymerase type-Y family. Monomer. Mg(2+) serves as cofactor.

It is found in the cytoplasm. The catalysed reaction is DNA(n) + a 2'-deoxyribonucleoside 5'-triphosphate = DNA(n+1) + diphosphate. Its function is as follows. Poorly processive, error-prone DNA polymerase involved in untargeted mutagenesis. Copies undamaged DNA at stalled replication forks, which arise in vivo from mismatched or misaligned primer ends. These misaligned primers can be extended by PolIV. Exhibits no 3'-5' exonuclease (proofreading) activity. May be involved in translesional synthesis, in conjunction with the beta clamp from PolIII. The protein is DNA polymerase IV (dinB) of Escherichia coli O6:H1 (strain CFT073 / ATCC 700928 / UPEC).